The following is an 880-amino-acid chain: Potassium/sodium hyperpolarization-activated cyclic nucleotide-gated channel 1 (880 aa).

Residues 1–80 are disordered; that stretch reads MEGGGKPNSS…SAGGLEDAEG (80 aa). The Cytoplasmic portion of the chain corresponds to 1 to 136; that stretch reads MEGGGKPNSS…WIIHSYSDFR (136 aa). Residues 8–34 show a composition bias toward low complexity; the sequence is NSSSNSRDDGNSVFPAKAPATGAGPAA. Positions 62–71 are enriched in gly residues; the sequence is DGGGGGGEES. The chain crosses the membrane as a helical span at residues 137 to 158; it reads FYWDLIMLIMMVGNLVIIPVGI. Topologically, residues 159-167 are extracellular; that stretch reads TFFTEQTTT. A helical membrane pass occupies residues 168 to 188; the sequence is PWIIFNVASDTVFLLDLIMNF. Residues 189–209 are Cytoplasmic-facing; it reads RTGTVNEDSSEIILDPKVIKM. The helical transmembrane segment at 210–230 threads the bilayer; the sequence is NYLKSWFVVDFISSIPVDYIF. Residues 231 to 254 lie on the Extracellular side of the membrane; that stretch reads LIVEKGMDSEVYKTARALRIVRFT. Residues 255–275 form a helical; Voltage-sensor membrane-spanning segment; that stretch reads KILSLLRLLRLSRLIRYIHQW. The Cytoplasmic segment spans residues 276 to 289; sequence EEIFHMTYDLASAV. Residues 290–312 traverse the membrane as a helical segment; it reads VRIFNLIGMMLLLCHWDGCLQFL. Residues 313 to 338 lie on the Extracellular side of the membrane; it reads VPLLQDFPPDCWVSLNEMVNDSWGKQ. A glycan (N-linked (GlcNAc...) asparagine) is linked at N332. An intramembrane region (pore-forming) is located at residues 339–360; sequence YSYALFKAMSHMLCIGYGAQAP. Residues 352-356 carry the Selectivity filter motif; that stretch reads CIGYG. Topologically, residues 361 to 365 are extracellular; that stretch reads VSMSD. A helical transmembrane segment spans residues 366 to 386; sequence LWITMLSMIVGATCYAMFVGH. Residues 387–880 are Cytoplasmic-facing; it reads ATALIQSLDS…AEKPRFASNL (494 aa). 3',5'-cyclic AMP-binding residues include G533, E534, C536, R543, T544, R584, and R587. The segment covering 641-664 has biased composition (polar residues); it reads LNSTSSTATPTSRMRTQSPPVYTA. Disordered regions lie at residues 641-686, 718-786, and 835-880; these read LNST…QPSA, ASQL…LPHE, and MSSG…ASNL. Composition is skewed to low complexity over residues 665–685 and 725–738; these read TSLS…PQPS and PQQQ…QTQP. Residues 760–770 are compositionally biased toward polar residues; that stretch reads STQALPNTSLT. Over residues 844–855 the composition is skewed to pro residues; it reads RGVPPAPPPPAA. The span at 870-880 shows a compositional bias: basic and acidic residues; sequence EAEKPRFASNL.

It belongs to the potassium channel HCN family. Homotetramer. Heterotetramer with HCN2. The potassium channel is composed of a homo- or heterotetrameric complex of pore-forming subunits. Interacts with KCNE2. Interacts with the SH3 domain of CSK. In terms of tissue distribution, detected in myocytes in heart sinoatrial node (SAN) and in brain, in particular in the granule cell layer and in Purkinje neuron bodies in the cerebellum.

It is found in the cell membrane. The catalysed reaction is Na(+)(in) = Na(+)(out). It carries out the reaction K(+)(in) = K(+)(out). Activated by cAMP. cAMP binding promotes tetramerization and formation of an active channel. Compared to other family members, cAMP has less stimulatory effect on HCN1 because part of the molecules already contain bound cAMP and form homotetramers when cAMP levels are low, this inherent tetramerization in HCN1 results in a weaker response to increased cAMP. Hyperpolarization-activated ion channel that are permeable to sodium and potassium ions. Exhibits weak selectivity for potassium over sodium ions. Contributes to the native pacemaker currents in heart (If) and in neurons (Ih). Participates in cerebellar mechanisms of motor learning. May mediate responses to sour stimuli. The polypeptide is Potassium/sodium hyperpolarization-activated cyclic nucleotide-gated channel 1 (HCN1) (Oryctolagus cuniculus (Rabbit)).